The primary structure comprises 32 residues: MSDIN-like toxin proprotein 3 (32 aa).

The propeptide occupies methionine 1 to proline 10. The cyclopeptide (Ser-Pro) cross-link spans serine 11–proline 17. A propeptide spanning residues cysteine 18–arginine 32 is cleaved from the precursor.

Belongs to the MSDIN fungal toxin family. Post-translationally, processed by the macrocyclase-peptidase enzyme POPB to yield a toxic cyclic heptapeptide. POPB first removes 10 residues from the N-terminus. Conformational trapping of the remaining peptide forces the enzyme to release this intermediate rather than proceed to macrocyclization. The enzyme rebinds the remaining peptide in a different conformation and catalyzes macrocyclization of the N-terminal 8 residues.

Its function is as follows. Probable toxin that belongs to the MSDIN-like toxin family responsible for a large number of food poisoning cases and deaths. In Amanita phalloides (Death cap), this protein is MSDIN-like toxin proprotein 3.